We begin with the raw amino-acid sequence, 781 residues long: Tax1-binding protein 1 homolog A (781 aa).

Coiled coils occupy residues 148–453 (NSDI…QGDA) and 488–581 (DVEK…YMRE). A compositionally biased stretch (polar residues) spans 441–465 (KLTQQQETQQGDANRNDASTETTLE). 2 disordered regions span residues 441 to 510 (KLTQ…EEEC) and 630 to 691 (ETRD…EAPA). The segment covering 484–495 (TVARDVEKSRDE) has biased composition (basic and acidic residues). Residues 496–510 (EGNEQEEEDEEEEEC) show a composition bias toward acidic residues. The segment covering 646–656 (RPPPLAPPPWG) has biased composition (pro residues). UBZ1-type zinc fingers lie at residues 716-742 (HKQCPLCEVIFPPHFEQSSFERHVESH) and 743-769 (WRVCPVCSEQFPLDCQQQLYEKHVHTH). Residues cysteine 719, cysteine 722, histidine 738, histidine 742, cysteine 746, cysteine 749, histidine 765, and histidine 769 each coordinate Zn(2+).

As to expression, little expression is observed during pectoral fin development, except for an elevated level of expression in the distal mesenchyme cells of some samples.

Functionally, may have anti-apoptotic activity. The protein is Tax1-binding protein 1 homolog A of Danio rerio (Zebrafish).